Here is a 257-residue protein sequence, read N- to C-terminus: Probable pectate lyase E (257 aa).

A signal peptide spans 1-17; it reads MYQKLLLVPLLLTSALA.

Belongs to the polysaccharide lyase 3 family. Ca(2+) serves as cofactor.

Its subcellular location is the secreted. It carries out the reaction Eliminative cleavage of (1-&gt;4)-alpha-D-galacturonan to give oligosaccharides with 4-deoxy-alpha-D-galact-4-enuronosyl groups at their non-reducing ends.. Pectinolytic enzyme consist of four classes of enzymes: pectin lyase, polygalacturonase, pectin methylesterase and rhamnogalacturonase. Among pectinolytic enzymes, pectin lyase is the most important in depolymerization of pectin, since it cleaves internal glycosidic bonds of highly methylated pectins. Favors pectate, the anion, over pectin, the methyl ester. In Aspergillus flavus (strain ATCC 200026 / FGSC A1120 / IAM 13836 / NRRL 3357 / JCM 12722 / SRRC 167), this protein is Probable pectate lyase E (plyE).